A 359-amino-acid polypeptide reads, in one-letter code: UDP-N-acetylglucosamine--N-acetylmuramyl-(pentapeptide) pyrophosphoryl-undecaprenol N-acetylglucosamine transferase (359 aa).

UDP-N-acetyl-alpha-D-glucosamine-binding positions include Thr15–Gly17, Asn127, Arg166, Ser191, Ile245, Ala264–Glu269, and Gln290.

The protein belongs to the glycosyltransferase 28 family. MurG subfamily.

The protein resides in the cell inner membrane. The enzyme catalyses di-trans,octa-cis-undecaprenyl diphospho-N-acetyl-alpha-D-muramoyl-L-alanyl-D-glutamyl-meso-2,6-diaminopimeloyl-D-alanyl-D-alanine + UDP-N-acetyl-alpha-D-glucosamine = di-trans,octa-cis-undecaprenyl diphospho-[N-acetyl-alpha-D-glucosaminyl-(1-&gt;4)]-N-acetyl-alpha-D-muramoyl-L-alanyl-D-glutamyl-meso-2,6-diaminopimeloyl-D-alanyl-D-alanine + UDP + H(+). Its pathway is cell wall biogenesis; peptidoglycan biosynthesis. In terms of biological role, cell wall formation. Catalyzes the transfer of a GlcNAc subunit on undecaprenyl-pyrophosphoryl-MurNAc-pentapeptide (lipid intermediate I) to form undecaprenyl-pyrophosphoryl-MurNAc-(pentapeptide)GlcNAc (lipid intermediate II). This is UDP-N-acetylglucosamine--N-acetylmuramyl-(pentapeptide) pyrophosphoryl-undecaprenol N-acetylglucosamine transferase from Pseudomonas putida (strain ATCC 47054 / DSM 6125 / CFBP 8728 / NCIMB 11950 / KT2440).